The sequence spans 192 residues: Adenylate kinase (192 aa).

Position 10-18 (10-18) interacts with ATP; that stretch reads GVPGVGGTT.

Belongs to the archaeal adenylate kinase family. In terms of assembly, monomer.

It is found in the cytoplasm. The enzyme catalyses AMP + ATP = 2 ADP. The polypeptide is Adenylate kinase (Methanococcus maripaludis (strain C7 / ATCC BAA-1331)).